The sequence spans 376 residues: MLPLSIKDDEYKPPKFNLFGKISGWFRSILSDKTSRNLFFFLCLNLSFAFVELLYGIWSNCLGLISDSFHMFFDSTAILAGLAASVISKWRDNDAFSYGYVRAEVLAGFVNGLFLIFTAFFIFSEGVERALAPPDVHHERLLLVSILGFVVNLIGIFVFKHGGHGHSHGSGHGHSHSLFNGALDQAHGHVDHCHSHEVKHGAAHSHDHAHGHGHFHSHDGPSLKETTGPSRQILQGVFLHILADTLGSIGVIASAIMMQNFGLMIADPICSILIAILIVVSVIPLLRESVGILMQRTPPLLENSLPQCYQRVQQLQGVYSLQEQHFWTLCSDVYVGTLKLIVAPDADARWILSQTHNIFTQAGVRQLYVQIDFAAM.

Over 1 to 37 (MLPLSIKDDEYKPPKFNLFGKISGWFRSILSDKTSRN) the chain is Cytoplasmic. A helical transmembrane segment spans residues 38–58 (LFFFLCLNLSFAFVELLYGIW). Topologically, residues 59–67 (SNCLGLISD) are lumenal. The chain crosses the membrane as a helical span at residues 68–88 (SFHMFFDSTAILAGLAASVIS). Residues 89–102 (KWRDNDAFSYGYVR) lie on the Cytoplasmic side of the membrane. The chain crosses the membrane as a helical span at residues 103 to 123 (AEVLAGFVNGLFLIFTAFFIF). Over 124–140 (SEGVERALAPPDVHHER) the chain is Lumenal. Residues 141–161 (LLLVSILGFVVNLIGIFVFKH) form a helical membrane-spanning segment. The interval 161–218 (HGGHGHSHGSGHGHSHSLFNGALDQAHGHVDHCHSHEVKHGAAHSHDHAHGHGHFHSH) is his-rich loop. The Cytoplasmic segment spans residues 162-236 (GGHGHSHGSG…TGPSRQILQG (75 aa)). Over residues 194-222 (HSHEVKHGAAHSHDHAHGHGHFHSHDGPS) the composition is skewed to basic and acidic residues. The interval 194–226 (HSHEVKHGAAHSHDHAHGHGHFHSHDGPSLKET) is disordered. A helical membrane pass occupies residues 237 to 257 (VFLHILADTLGSIGVIASAIM). Residues 258–262 (MQNFG) are Lumenal-facing. A helical membrane pass occupies residues 263-283 (LMIADPICSILIAILIVVSVI). Residues 284 to 376 (PLLRESVGIL…LYVQIDFAAM (93 aa)) lie on the Cytoplasmic side of the membrane.

It belongs to the cation diffusion facilitator (CDF) transporter (TC 2.A.4) family. SLC30A subfamily. Homooligomer. Highly expressed in megakaryocytes and other bone marrow cells and in the epithelium of the small intestine. Expressed in testis (in Leydig cells), adrenal gland (in adrenal medula, zona fasciculata and zona of reticularis), and pituitary gland (in somatotropic cells).

The protein resides in the golgi apparatus membrane. The protein localises to the cytoplasmic vesicle. Its subcellular location is the golgi apparatus. It localises to the trans-Golgi network. It is found in the sarcoplasmic reticulum. The protein resides in the mitochondrion. It catalyses the reaction Zn(2+)(in) = Zn(2+)(out). Its function is as follows. Zinc ion transporter mediating zinc entry from the cytosol into the lumen of organelles along the secretory pathway. By contributing to zinc ion homeostasis within the early secretory pathway, regulates the activation and folding of enzymes like alkaline phosphatases. In Homo sapiens (Human), this protein is Zinc transporter 7.